The primary structure comprises 626 residues: Carnitine O-acetyltransferase (626 aa).

At lysine 93 the chain carries N6-succinyllysine. Lysine 261 bears the N6-acetyllysine; alternate mark. N6-succinyllysine; alternate is present on lysine 261. An N6-acetyllysine modification is found at lysine 268. The active-site Proton acceptor is the histidine 343. CoA-binding positions include lysine 419 and 423–430; that span reads KSQKLSPD. 2 residues coordinate (R)-carnitine: tyrosine 452 and serine 454. Serine 456 provides a ligand contact to CoA. Threonine 465 is a (R)-carnitine binding site. Arginine 504 and glutamine 555 together coordinate CoA. Positions 624–626 match the Microbody targeting signal motif; sequence AKL.

Belongs to the carnitine/choline acetyltransferase family. In terms of assembly, monomer. Expressed in flagella of epididymal sperm.

The protein localises to the endoplasmic reticulum. It localises to the peroxisome. It is found in the mitochondrion inner membrane. The enzyme catalyses (R)-carnitine + acetyl-CoA = O-acetyl-(R)-carnitine + CoA. The catalysed reaction is propanoyl-CoA + (R)-carnitine = O-propanoyl-(R)-carnitine + CoA. It catalyses the reaction butanoyl-CoA + (R)-carnitine = O-butanoyl-(R)-carnitine + CoA. It carries out the reaction hexanoyl-CoA + (R)-carnitine = O-hexanoyl-(R)-carnitine + CoA. The enzyme catalyses octanoyl-CoA + (R)-carnitine = O-octanoyl-(R)-carnitine + CoA. The catalysed reaction is decanoyl-CoA + (R)-carnitine = O-decanoyl-(R)-carnitine + CoA. It catalyses the reaction 3-methylbutanoyl-CoA + (R)-carnitine = O-3-methylbutanoyl-(R)-carnitine + CoA. It carries out the reaction 2-methylpropanoyl-CoA + (R)-carnitine = O-isobutanoyl-(R)-carnitine + CoA. The enzyme catalyses 2-methylbutanoyl-CoA + (R)-carnitine = O-2-methylbutanoyl-(R)-carnitine + CoA. The catalysed reaction is acetoacetyl-CoA + (R)-carnitine = O-3-oxobutanoyl-(R)-carnitine + CoA. It catalyses the reaction 3-hydroxybutanoyl-CoA + (R)-carnitine = O-3-hydroxybutanoyl-(R)-carnitine + CoA. It carries out the reaction 4,8-dimethylnonanoyl-CoA + (R)-carnitine = O-4,8-dimethylnonanoyl-(R)-carnitine + CoA. The enzyme catalyses 2,6-dimethylheptanoyl-CoA + (R)-carnitine = O-2,6-dimethylheptanoyl-(R)-carnitine + CoA. Its function is as follows. Catalyzes the reversible transfer of acyl groups from carnitine to coenzyme A (CoA) and regulates the acyl-CoA/CoA ratio. Also plays a crucial role in the transport of fatty acids for beta-oxidation. Responsible for the synthesis of short- and branched-chain acylcarnitines. Active towards some branched-chain amino acid oxidation pathway (BCAAO) intermediates. Trans-2-enoyl-CoAs and 2-methylacyl-CoAs are poor substrates. In Rattus norvegicus (Rat), this protein is Carnitine O-acetyltransferase.